A 672-amino-acid chain; its full sequence is Transmembrane 9 superfamily member 2 (672 aa).

Positions 1–18 (MKRGVWLLIYCYATLTKG) are cleaved as a signal peptide. The Extracellular segment spans residues 19–307 (FSLPGLSPTT…DKYLHIYDPQ (289 aa)). A helical membrane pass occupies residues 308–328 (IQWFSLINFSVIVILLSSVVM). The Cytoplasmic segment spans residues 329–383 (HSLLRALKSDLARYNELNLDNEFHEDSGWKLGHGDVFRTPSKSMLLSILVGSGMQ). A helical membrane pass occupies residues 384–404 (LFLMVMCSIFFAAVGLVSPVS). Over 405 to 410 (RGSLPT) the chain is Extracellular. The chain crosses the membrane as a helical span at residues 411-431 (VMFVLYALFGFVGSYASMGVY). At 432–447 (KFFRGPYWKANMILTP) the chain is on the cytoplasmic side. A helical transmembrane segment spans residues 448–468 (ILLPGAIFLLIVIMNFFLLFA). Over 469-479 (HSSGVIPARSL) the chain is Extracellular. A helical transmembrane segment spans residues 480–500 (FFIILLWFLVSVPLSFAGSIV). Residues 501-532 (AHKQCNWDEHPTKTNQIARQIPYQPWYLRTAQ) lie on the Cytoplasmic side of the membrane. The helical transmembrane segment at 533–553 (ATLIAGIFSFGSIAVELYFIY) threads the bilayer. Residues 554 to 565 (SSLWFNKIFYMF) lie on the Extracellular side of the membrane. Residues 566–586 (GFLLFSFLLLTLTTSLVTILI) form a helical membrane-spanning segment. The Cytoplasmic portion of the chain corresponds to 587 to 601 (TYYSLCLENWLWQWR). The helical transmembrane segment at 602 to 622 (SFIIGGLGCSIYTFIHSILFT) threads the bilayer. Over 623–628 (KFKLGG) the chain is Extracellular. Residues 629–649 (VITVVLYLGYSLIISALCCVV) traverse the membrane as a helical segment. Over 650–672 (TGAIGFFSSMFFIRKIYSAIKVE) the chain is Cytoplasmic.

This sequence belongs to the nonaspanin (TM9SF) (TC 9.A.2) family.

The protein resides in the vacuole membrane. Functionally, with EMP70 and TMN3, plays a critical role in the late stages of a nutrient-controlled pathway notably regulating FLO11 gene expression. Acts downstream of RAS2 and TOR. Essential for cell adhesion and filamentous growth. May play a role as effector of cellular copper homeostasis. In Saccharomyces cerevisiae (strain ATCC 204508 / S288c) (Baker's yeast), this protein is Transmembrane 9 superfamily member 2 (TMN2).